A 692-amino-acid polypeptide reads, in one-letter code: Meiotic sister-chromatid recombination protein 6, mitochondrial (692 aa).

The N-terminal 30 residues, 1-30 (MLSHNALRAFDCSKVIISRRCLTSSTSIYQ), are a transit peptide targeting the mitochondrion.

It is found in the mitochondrion. Functionally, may be involved in the control of meiotic sister-chromatid recombination. In Saccharomyces cerevisiae (strain ATCC 204508 / S288c) (Baker's yeast), this protein is Meiotic sister-chromatid recombination protein 6, mitochondrial (MSC6).